Reading from the N-terminus, the 835-residue chain is Ribonucleoside-diphosphate reductase large subunit (835 aa).

Residues Ser-222, 237–238, Gly-266, 447–451, and 660–664 contribute to the substrate site; these read SC, NLCCE, and PSASS. A disulfide bridge links Cys-238 with Cys-464. Asn-447 (proton acceptor) is an active-site residue. Cys-449 functions as the Cysteine radical intermediate in the catalytic mechanism. Glu-451 (proton acceptor) is an active-site residue.

Belongs to the ribonucleoside diphosphate reductase large chain family. As to quaternary structure, heterotetramer composed of a homodimer of the large subunit (R1) and a homodimer of the small subunit (R2). Larger multisubunit protein complex are also active, composed of (R1)n(R2)n.

The catalysed reaction is a 2'-deoxyribonucleoside 5'-diphosphate + [thioredoxin]-disulfide + H2O = a ribonucleoside 5'-diphosphate + [thioredoxin]-dithiol. Its function is as follows. Ribonucleoside-diphosphate reductase holoenzyme provides the precursors necessary for viral DNA synthesis. Allows virus growth in non-dividing cells. Catalyzes the biosynthesis of deoxyribonucleotides from the corresponding ribonucleotides. This is Ribonucleoside-diphosphate reductase large subunit from Magallana gigas (Pacific oyster).